The following is a 207-amino-acid chain: MNRGDLRLVVGLGNPGNRYANTRHNVGFMALERLASREGGGFRSMPKLQGQLADLGSGDKRLRLLMPQTFMNDSGRSIRAALDWFGFELHQLLVLVDDMDLPLGRLRLRARGSAGGHNGLKSTIQHLGTQDFARLRIGIGAPGQNPSERKARTVSHVLGSFSRDEEPLLDKVLLEVVDGLERIQLQGLDLAGNHLNGLQLAPTSTEE.

Position 19 (tyrosine 19) interacts with tRNA. Histidine 24 (proton acceptor) is an active-site residue. Residues phenylalanine 70, asparagine 72, and asparagine 118 each contribute to the tRNA site.

This sequence belongs to the PTH family. As to quaternary structure, monomer.

It localises to the cytoplasm. The enzyme catalyses an N-acyl-L-alpha-aminoacyl-tRNA + H2O = an N-acyl-L-amino acid + a tRNA + H(+). Its function is as follows. Hydrolyzes ribosome-free peptidyl-tRNAs (with 1 or more amino acids incorporated), which drop off the ribosome during protein synthesis, or as a result of ribosome stalling. In terms of biological role, catalyzes the release of premature peptidyl moieties from peptidyl-tRNA molecules trapped in stalled 50S ribosomal subunits, and thus maintains levels of free tRNAs and 50S ribosomes. The polypeptide is Peptidyl-tRNA hydrolase (Synechococcus sp. (strain CC9311)).